Reading from the N-terminus, the 352-residue chain is tRNA uridine(34) hydroxylase (352 aa).

A Rhodanese domain is found at 144–238; that stretch reads SDPDVILIDT…YLEEVPASDS (95 aa). Cys-198 acts as the Cysteine persulfide intermediate in catalysis.

The protein belongs to the TrhO family.

The catalysed reaction is uridine(34) in tRNA + AH2 + O2 = 5-hydroxyuridine(34) in tRNA + A + H2O. Functionally, catalyzes oxygen-dependent 5-hydroxyuridine (ho5U) modification at position 34 in tRNAs. The sequence is that of tRNA uridine(34) hydroxylase from Psychrobacter cryohalolentis (strain ATCC BAA-1226 / DSM 17306 / VKM B-2378 / K5).